A 603-amino-acid chain; its full sequence is Pyruvate oxidase (603 aa).

The core stretch occupies residues 1 to 191; sequence MVMKQTKQTN…WYASANSYQT (191 aa). Residues 192–342 form an FAD-binding region; it reads PLLPEPDVQA…ILAQVSERES (151 aa). The thiamine pyrophosphate binding stretch occupies residues 343–603; sequence TPWWQANLAN…LQHQIGQGGF (261 aa). Mg(2+) contacts are provided by Asp-447, Asn-474, and Gln-476.

The protein belongs to the TPP enzyme family. As to quaternary structure, homotetramer. The cofactor is FAD. Requires Mg(2+) as cofactor. Thiamine diphosphate is required as a cofactor.

The enzyme catalyses pyruvate + phosphate + O2 + H(+) = acetyl phosphate + H2O2 + CO2. Its function is as follows. Important for the aerobic growth. Decarboxylates pyruvate in four steps. The energy released is partially stored in acetyl phosphate. The protein is Pyruvate oxidase (pox5) of Lactiplantibacillus plantarum (strain ATCC BAA-793 / NCIMB 8826 / WCFS1) (Lactobacillus plantarum).